The chain runs to 402 residues: Beta sliding clamp (402 aa).

The protein belongs to the beta sliding clamp family. In terms of assembly, forms a ring-shaped head-to-tail homodimer around DNA which binds and tethers DNA polymerases and other proteins to the DNA. The DNA replisome complex has a single clamp-loading complex (3 tau and 1 each of delta, delta', psi and chi subunits) which binds 3 Pol III cores (1 core on the leading strand and 2 on the lagging strand) each with a beta sliding clamp dimer. Additional proteins in the replisome are other copies of gamma, psi and chi, Ssb, DNA helicase and RNA primase.

It is found in the cytoplasm. Confers DNA tethering and processivity to DNA polymerases and other proteins. Acts as a clamp, forming a ring around DNA (a reaction catalyzed by the clamp-loading complex) which diffuses in an ATP-independent manner freely and bidirectionally along dsDNA. Initially characterized for its ability to contact the catalytic subunit of DNA polymerase III (Pol III), a complex, multichain enzyme responsible for most of the replicative synthesis in bacteria; Pol III exhibits 3'-5' exonuclease proofreading activity. The beta chain is required for initiation of replication as well as for processivity of DNA replication. This chain is Beta sliding clamp (dnaN), found in Mycobacterium tuberculosis (strain CDC 1551 / Oshkosh).